Here is a 363-residue protein sequence, read N- to C-terminus: Large ribosomal subunit protein uL4B (363 aa).

Residues 280 to 363 form a C-terminal-extended nuclear localization signal region; the sequence is PENIISNADV…EKFLSVLHEN (84 aa).

It belongs to the universal ribosomal protein uL4 family. As to quaternary structure, component of the large ribosomal subunit (LSU). Mature yeast ribosomes consist of a small (40S) and a large (60S) subunit. The 40S small subunit contains 1 molecule of ribosomal RNA (18S rRNA) and at least 33 different proteins. The large 60S subunit contains 3 rRNA molecules (25S, 5.8S and 5S rRNA) and at least 46 different proteins. uL4 is associated with the polypeptide exit tunnel. uL4 interacts with its chaperone ACL4 and the nuclear import receptor KAP104.

The protein resides in the cytoplasm. Functionally, component of the ribosome, a large ribonucleoprotein complex responsible for the synthesis of proteins in the cell. The small ribosomal subunit (SSU) binds messenger RNAs (mRNAs) and translates the encoded message by selecting cognate aminoacyl-transfer RNA (tRNA) molecules. The large subunit (LSU) contains the ribosomal catalytic site termed the peptidyl transferase center (PTC), which catalyzes the formation of peptide bonds, thereby polymerizing the amino acids delivered by tRNAs into a polypeptide chain. The nascent polypeptides leave the ribosome through a tunnel in the LSU and interact with protein factors that function in enzymatic processing, targeting, and the membrane insertion of nascent chains at the exit of the ribosomal tunnel. This is Large ribosomal subunit protein uL4B (rpl401) from Schizosaccharomyces pombe (strain 972 / ATCC 24843) (Fission yeast).